Reading from the N-terminus, the 310-residue chain is Bifunctional phosphoglucose/phosphomannose isomerase (310 aa).

The region spanning 22 to 152 (FDGSFRTGTF…IRPKHEDIEE (131 aa)) is the SIS domain. Gly-41, Ser-42, Ser-80, Ser-82, Thr-85, and Arg-128 together coordinate D-fructose 6-phosphate. Residue Glu-202 is the Proton acceptor of the active site. D-fructose 6-phosphate-binding residues include His-218 and Lys-306. Residue His-218 is the Proton donor of the active site. Lys-306 serves as the catalytic Proton acceptor.

It belongs to the PGI/PMI family. Homodimer.

It carries out the reaction alpha-D-glucose 6-phosphate = beta-D-fructose 6-phosphate. The catalysed reaction is D-mannose 6-phosphate = D-fructose 6-phosphate. With respect to regulation, inhibited by low concentrations of erythrose 4-phosphate and 6-phosphogluconate. Its function is as follows. Dual specificity isomerase that catalyzes the isomerization of both glucose-6-phosphate and mannose-6-phosphate to fructose-6-phosphate with similar catalytic efficiency. The sequence is that of Bifunctional phosphoglucose/phosphomannose isomerase from Thermoplasma acidophilum (strain ATCC 25905 / DSM 1728 / JCM 9062 / NBRC 15155 / AMRC-C165).